The sequence spans 338 residues: Holliday junction branch migration complex subunit RuvB (338 aa).

The segment at 1–184 is large ATPase domain (RuvB-L); the sequence is MTEEERLLSA…FGIISHMEYY (184 aa). ATP contacts are provided by residues Leu23, Arg24, Gly65, Lys68, Thr69, Thr70, 131–133, Arg174, Tyr184, and Arg221; that span reads EDF. Residue Thr69 participates in Mg(2+) binding. The interval 185–255 is small ATPAse domain (RuvB-S); sequence QEQDLKEIVL…IADKALTLLQ (71 aa). Residues 258 to 338 form a head domain (RuvB-H) region; that stretch reads HQGLDYVDQK…GYDYLEGRKN (81 aa). 2 residues coordinate DNA: Arg313 and Arg318.

This sequence belongs to the RuvB family. As to quaternary structure, homohexamer. Forms an RuvA(8)-RuvB(12)-Holliday junction (HJ) complex. HJ DNA is sandwiched between 2 RuvA tetramers; dsDNA enters through RuvA and exits via RuvB. An RuvB hexamer assembles on each DNA strand where it exits the tetramer. Each RuvB hexamer is contacted by two RuvA subunits (via domain III) on 2 adjacent RuvB subunits; this complex drives branch migration. In the full resolvosome a probable DNA-RuvA(4)-RuvB(12)-RuvC(2) complex forms which resolves the HJ.

Its subcellular location is the cytoplasm. The enzyme catalyses ATP + H2O = ADP + phosphate + H(+). The RuvA-RuvB-RuvC complex processes Holliday junction (HJ) DNA during genetic recombination and DNA repair, while the RuvA-RuvB complex plays an important role in the rescue of blocked DNA replication forks via replication fork reversal (RFR). RuvA specifically binds to HJ cruciform DNA, conferring on it an open structure. The RuvB hexamer acts as an ATP-dependent pump, pulling dsDNA into and through the RuvAB complex. RuvB forms 2 homohexamers on either side of HJ DNA bound by 1 or 2 RuvA tetramers; 4 subunits per hexamer contact DNA at a time. Coordinated motions by a converter formed by DNA-disengaged RuvB subunits stimulates ATP hydrolysis and nucleotide exchange. Immobilization of the converter enables RuvB to convert the ATP-contained energy into a lever motion, pulling 2 nucleotides of DNA out of the RuvA tetramer per ATP hydrolyzed, thus driving DNA branch migration. The RuvB motors rotate together with the DNA substrate, which together with the progressing nucleotide cycle form the mechanistic basis for DNA recombination by continuous HJ branch migration. Branch migration allows RuvC to scan DNA until it finds its consensus sequence, where it cleaves and resolves cruciform DNA. The sequence is that of Holliday junction branch migration complex subunit RuvB from Enterococcus faecalis (strain ATCC 700802 / V583).